We begin with the raw amino-acid sequence, 444 residues long: Trigger factor (444 aa).

The 86-residue stretch at 170–255 folds into the PPIase FKBP-type domain; sequence NDIAVIDFVG…LKAIKQLEIT (86 aa).

Belongs to the FKBP-type PPIase family. Tig subfamily.

It is found in the cytoplasm. It catalyses the reaction [protein]-peptidylproline (omega=180) = [protein]-peptidylproline (omega=0). In terms of biological role, involved in protein export. Acts as a chaperone by maintaining the newly synthesized protein in an open conformation. Functions as a peptidyl-prolyl cis-trans isomerase. The chain is Trigger factor (tig) from Mycoplasma pneumoniae (strain ATCC 29342 / M129 / Subtype 1) (Mycoplasmoides pneumoniae).